We begin with the raw amino-acid sequence, 156 residues long: Ribosomal RNA large subunit methyltransferase H (156 aa).

Residues leucine 72, glycine 104, and 123–128 (FGAMVW) contribute to the S-adenosyl-L-methionine site.

The protein belongs to the RNA methyltransferase RlmH family. Homodimer.

The protein resides in the cytoplasm. It catalyses the reaction pseudouridine(1915) in 23S rRNA + S-adenosyl-L-methionine = N(3)-methylpseudouridine(1915) in 23S rRNA + S-adenosyl-L-homocysteine + H(+). Its function is as follows. Specifically methylates the pseudouridine at position 1915 (m3Psi1915) in 23S rRNA. This chain is Ribosomal RNA large subunit methyltransferase H, found in Ruegeria pomeroyi (strain ATCC 700808 / DSM 15171 / DSS-3) (Silicibacter pomeroyi).